The chain runs to 612 residues: Protein tipD (612 aa).

The tract at residues 95–128 is disordered; sequence RNEKKTQQQPPSGSSKMDSSSSSSSSNRVSGMGS. A compositionally biased stretch (low complexity) spans 106-128; that stretch reads SGSSKMDSSSSSSSSNRVSGMGS. 7 WD repeats span residues 322 to 361, 364 to 403, 406 to 444, 447 to 486, 490 to 530, 535 to 576, and 582 to 611; these read GHNSEIYCMAFNSIGNLLATGGGDKCVKVWDVISGQQKST, GASQSIVSVSFSPNDESILGTSNDNSARLWNTELGRSRHT, GHIGKVYTGKFINSNRVVTGSHDRTIKLWDLQKGYCTRT, CFSSCNDLVILGGSGTHLASGHVDHSVRFWDSNAGEPTQV, IHEG…TIRT, EYRN…TVKV, and NNGSSVCCCSWSPLANIFISADKDKNIIQW.

This sequence belongs to the WD repeat tipD family.

Functionally, not known; disruption of the gene for tipD results in morphological defects. In Dictyostelium discoideum (Social amoeba), this protein is Protein tipD (tipD).